The primary structure comprises 1254 residues: Ubiquitin carboxyl-terminal hydrolase 12 (1254 aa).

Position 84 is a phosphoserine (serine 84). The DUSP domain occupies 97 to 199 (NVLEQQRDVV…GSYPVVTNLV (103 aa)). One can recognise a USP domain in the interval 364–1110 (TGLVNLGNTC…SAYLLFYIRR (747 aa)). Catalysis depends on cysteine 373, which acts as the Nucleophile. A disordered region spans residues 827-893 (DEGDTEGSEA…EPELTDKPEA (67 aa)). The span at 854–864 (TVTNNENVNNT) shows a compositional bias: low complexity. Residues 867 to 883 (RDEDMELTDDVEEDAST) are compositionally biased toward acidic residues. Histidine 1068 functions as the Proton acceptor in the catalytic mechanism. Phosphoserine is present on serine 1160. The interval 1188–1207 (QDCNDEDDNDDGERTNSGRR) is disordered. Acidic residues predominate over residues 1189 to 1198 (DCNDEDDNDD).

This sequence belongs to the peptidase C19 family. As to quaternary structure, interacts with FZO1.

It carries out the reaction Thiol-dependent hydrolysis of ester, thioester, amide, peptide and isopeptide bonds formed by the C-terminal Gly of ubiquitin (a 76-residue protein attached to proteins as an intracellular targeting signal).. Functionally, ubiquitin carboxyl-terminal hydrolase that recognizes ubiquitin chains that stabilize FZO1 and promote mitochondrial fusion. UBP12 deubiquitylates FZO1 only after oligomerization. The chain is Ubiquitin carboxyl-terminal hydrolase 12 (UBP12) from Saccharomyces cerevisiae (strain ATCC 204508 / S288c) (Baker's yeast).